The chain runs to 210 residues: Ras-related protein Rab-2-B (210 aa).

GTP is bound at residue 13–21 (GDTGVGKSC). The short motif at 35-43 (HDLTIGVEF) is the Effector region element. Residues 61-65 (DTAGQ), 119-122 (NKCD), and 149-151 (SAK) each bind GTP. S-geranylgeranyl cysteine attachment occurs at residues Cys208 and Cys209.

It belongs to the small GTPase superfamily. Rab family.

The protein resides in the endoplasmic reticulum membrane. The protein localises to the golgi apparatus membrane. Protein transport. Probably involved in vesicular traffic. The protein is Ras-related protein Rab-2-B (RAB2B) of Zea mays (Maize).